Here is a 497-residue protein sequence, read N- to C-terminus: 3-octaprenyl-4-hydroxybenzoate carboxy-lyase (497 aa).

Asn175 contacts Mn(2+). Prenylated FMN-binding positions include 178-180 (IYR), 192-194 (RWL), and 197-198 (RG). Glu241 contributes to the Mn(2+) binding site. The active-site Proton donor is Asp290.

This sequence belongs to the UbiD family. Homohexamer. The cofactor is prenylated FMN. It depends on Mn(2+) as a cofactor.

The protein resides in the cell membrane. It catalyses the reaction a 4-hydroxy-3-(all-trans-polyprenyl)benzoate + H(+) = a 2-(all-trans-polyprenyl)phenol + CO2. The protein operates within cofactor biosynthesis; ubiquinone biosynthesis. Catalyzes the decarboxylation of 3-octaprenyl-4-hydroxy benzoate to 2-octaprenylphenol, an intermediate step in ubiquinone biosynthesis. In Shigella boydii serotype 4 (strain Sb227), this protein is 3-octaprenyl-4-hydroxybenzoate carboxy-lyase.